The primary structure comprises 201 residues: Holliday junction branch migration complex subunit RuvA (201 aa).

The tract at residues 1 to 63 is domain I; the sequence is MIEYVRGELA…EDAYVLYGFA (63 aa). The interval 64 to 142 is domain II; it reads DKQEREIFLL…TMGATVAGGS (79 aa). The flexible linker stretch occupies residues 143 to 151; that stretch reads ASAGMLLQS. The tract at residues 152–201 is domain III; sequence ASVEVQEEAVAALTMLGFAAAPSQKVVLAILKEEPDAPVEKVIKLALKRL.

Belongs to the RuvA family. In terms of assembly, homotetramer. Forms an RuvA(8)-RuvB(12)-Holliday junction (HJ) complex. HJ DNA is sandwiched between 2 RuvA tetramers; dsDNA enters through RuvA and exits via RuvB. An RuvB hexamer assembles on each DNA strand where it exits the tetramer. Each RuvB hexamer is contacted by two RuvA subunits (via domain III) on 2 adjacent RuvB subunits; this complex drives branch migration. In the full resolvosome a probable DNA-RuvA(4)-RuvB(12)-RuvC(2) complex forms which resolves the HJ.

Its subcellular location is the cytoplasm. In terms of biological role, the RuvA-RuvB-RuvC complex processes Holliday junction (HJ) DNA during genetic recombination and DNA repair, while the RuvA-RuvB complex plays an important role in the rescue of blocked DNA replication forks via replication fork reversal (RFR). RuvA specifically binds to HJ cruciform DNA, conferring on it an open structure. The RuvB hexamer acts as an ATP-dependent pump, pulling dsDNA into and through the RuvAB complex. HJ branch migration allows RuvC to scan DNA until it finds its consensus sequence, where it cleaves and resolves the cruciform DNA. The protein is Holliday junction branch migration complex subunit RuvA of Bacteroides thetaiotaomicron (strain ATCC 29148 / DSM 2079 / JCM 5827 / CCUG 10774 / NCTC 10582 / VPI-5482 / E50).